The primary structure comprises 225 residues: Endonuclease V (225 aa).

Mg(2+) contacts are provided by D43 and D110.

It belongs to the endonuclease V family. Requires Mg(2+) as cofactor.

The protein localises to the cytoplasm. The catalysed reaction is Endonucleolytic cleavage at apurinic or apyrimidinic sites to products with a 5'-phosphate.. Functionally, DNA repair enzyme involved in the repair of deaminated bases. Selectively cleaves double-stranded DNA at the second phosphodiester bond 3' to a deoxyinosine leaving behind the intact lesion on the nicked DNA. This Thermotoga sp. (strain RQ2) protein is Endonuclease V.